A 276-amino-acid polypeptide reads, in one-letter code: Halorhodopsin (276 aa).

A propeptide spanning residues 1-21 is cleaved from the precursor; it reads MTAVSTTATTVLQATQSDVLQ. Topologically, residues 22–25 are extracellular; it reads EIQS. A helical transmembrane segment spans residues 26 to 51; it reads NFLLNSSIWVNIALAGVVILLFVAMG. Topologically, residues 52–57 are cytoplasmic; sequence RDLESP. Residues 58–81 form a helical membrane-spanning segment; that stretch reads RAKLIWVATMLVPLVSISSYAGLA. Topologically, residues 82 to 105 are extracellular; the sequence is SGLTVGFLQMPPGHALAGQEVLSP. A helical membrane pass occupies residues 106 to 127; sequence WGRYLTWTFSTPMILLALGLLA. The Cytoplasmic portion of the chain corresponds to 128 to 130; it reads DTD. The helical transmembrane segment at 131-154 threads the bilayer; sequence IASLFTAITMDIGMCVTGLAAALI. Residues 155–157 are Extracellular-facing; it reads TSS. A helical transmembrane segment spans residues 158–180; it reads HLLRWVFYGISCAFFVAVLYVLL. Residues 181–192 lie on the Cytoplasmic side of the membrane; that stretch reads VQWPADAEAAGT. A helical membrane pass occupies residues 193 to 216; it reads SEIFGTLKILTVVLWLGYPILWAL. The Extracellular portion of the chain corresponds to 217 to 225; it reads GSEGVALLS. A helical membrane pass occupies residues 226–254; sequence VGVTSWGYSGLDILAKYVFAFLLLRWVAA. The residue at position 241 (lysine 241) is an N6-(retinylidene)lysine. The Cytoplasmic portion of the chain corresponds to 255–276; it reads NEGTVSGSGMGIGSGGAAPADD.

Belongs to the archaeal/bacterial/fungal opsin family.

The protein resides in the cell membrane. Functionally, light-driven anion pump. In Halobacterium halobium (strain shark), this protein is Halorhodopsin.